Here is a 149-residue protein sequence, read N- to C-terminus: Large ribosomal subunit protein bL9 (149 aa).

The protein belongs to the bacterial ribosomal protein bL9 family.

Its function is as follows. Binds to the 23S rRNA. The sequence is that of Large ribosomal subunit protein bL9 from Magnetococcus marinus (strain ATCC BAA-1437 / JCM 17883 / MC-1).